Consider the following 381-residue polypeptide: Chymosin (381 aa).

Positions 1–16 (MRCLVVLLAALALSQA) are cleaved as a signal peptide. Residues 17–58 (SGITRIPLHKGKTLRKALKERGLLEDFLQRQQYAVSSKYSSL) constitute a propeptide, activation peptide. The Peptidase A1 domain occupies 74–378 (YFGKIYIGTP…DRANNRVGLA (305 aa)). The active site involves Asp-92. Cys-105 and Cys-110 are oxidised to a cystine. The N-linked (GlcNAc...) asparagine glycan is linked to Asn-158. A disulfide bridge connects residues Cys-265 and Cys-269. Asp-274 is an active-site residue. Cys-308 and Cys-341 form a disulfide bridge. Residue Asn-349 is glycosylated (N-linked (GlcNAc...) asparagine).

The protein belongs to the peptidase A1 family.

The catalysed reaction is Broad specificity similar to that of pepsin A. Clots milk by cleavage of a single 104-Ser-Phe-|-Met-Ala-107 bond in kappa-chain of casein.. Its function is as follows. Chymosin is synthesized in the mucosa of the abomasum (fourth stomach) of young (unweaned) ruminants. The enzyme hydrolyzes casein to paracasein. In Camelus dromedarius (Dromedary), this protein is Chymosin.